The sequence spans 338 residues: Ketol-acid reductoisomerase (NADP(+)) (338 aa).

The KARI N-terminal Rossmann domain maps to 1–181; sequence MKVFYDKDCD…GGGKGGIIET (181 aa). Residues 24 to 27, Arg47, and Ser52 contribute to the NADP(+) site; that span reads YGSQ. The active site involves His107. Residue Gly133 participates in NADP(+) binding. In terms of domain architecture, KARI C-terminal knotted spans 182–327; sequence NFKEETETDL…GQLRAMMPWI (146 aa). Asp190, Glu194, Glu226, and Glu230 together coordinate Mg(2+). Ser251 lines the substrate pocket.

The protein belongs to the ketol-acid reductoisomerase family. Mg(2+) serves as cofactor.

The enzyme catalyses (2R)-2,3-dihydroxy-3-methylbutanoate + NADP(+) = (2S)-2-acetolactate + NADPH + H(+). It catalyses the reaction (2R,3R)-2,3-dihydroxy-3-methylpentanoate + NADP(+) = (S)-2-ethyl-2-hydroxy-3-oxobutanoate + NADPH + H(+). It functions in the pathway amino-acid biosynthesis; L-isoleucine biosynthesis; L-isoleucine from 2-oxobutanoate: step 2/4. The protein operates within amino-acid biosynthesis; L-valine biosynthesis; L-valine from pyruvate: step 2/4. Functionally, involved in the biosynthesis of branched-chain amino acids (BCAA). Catalyzes an alkyl-migration followed by a ketol-acid reduction of (S)-2-acetolactate (S2AL) to yield (R)-2,3-dihydroxy-isovalerate. In the isomerase reaction, S2AL is rearranged via a Mg-dependent methyl migration to produce 3-hydroxy-3-methyl-2-ketobutyrate (HMKB). In the reductase reaction, this 2-ketoacid undergoes a metal-dependent reduction by NADPH to yield (R)-2,3-dihydroxy-isovalerate. The polypeptide is Ketol-acid reductoisomerase (NADP(+)) (Delftia acidovorans (strain DSM 14801 / SPH-1)).